The sequence spans 553 residues: MSTDNNGGIKRPDGKVNAIDTDYQIGQDNVALKVGPFGLDIHNRVFAISGMAIVLFVVATLTFRQQVEPFFAGLRAWLVSNLDWFFLASGNVFVIVCLVLIVTPLGRVRIGGTEATPDYSYAGWLAMLFAAGMGIGLVFFGVSEPMSHFSSALGGVNIENGVRTDWAPLGGAVGDTDAASALGMAATIYHWALHPWSIYALLALGLAIFSFNKGLPLTMRSIFYPLFGERVWGWVGHIIDILAVVATVFGLATSLGYGASQAATGLNFLFGVPMTDTTQVVLIVVITALALISVVAGLDSGVKRLSEINMILAAMLLFFVIIVGPTMAILTGFFDNIASYITNIPALSMPFEREDVNYSQGWTAFYWAWWISWSPFVGMFIARVSRGRSVREFIICVILIPSTVCVLWMTAFGGTAISQYVNDGYEAVFNAELPLKLFAMLDVMPFAEITSVVGIILVVVFFITSSDSGSLVIDTIAAGGKVDAPTPQRVFWCTFEGLVAIALMLGGGLAAAQAMAVTTGLPFTIVLLVATVSLIKGLMDEPRLSTKAVKKDK.

A run of 12 helical transmembrane segments spans residues 43–63, 85–105, 122–142, 191–211, 231–251, 278–298, 310–330, 362–382, 393–413, 443–463, 490–510, and 515–535; these read NRVFAISGMAIVLFVVATLTF, FFLASGNVFVIVCLVLIVTPL, AGWLAMLFAAGMGIGLVFFGV, WALHPWSIYALLALGLAIFSF, VWGWVGHIIDILAVVATVFGL, TQVVLIVVITALALISVVAGL, MILAAMLLFFVIIVGPTMAIL, WTAFYWAWWISWSPFVGMFIA, FIICVILIPSTVCVLWMTAFG, VMPFAEITSVVGIILVVVFFI, VFWCTFEGLVAIALMLGGGLA, and MAVTTGLPFTIVLLVATVSLI.

This sequence belongs to the BCCT transporter (TC 2.A.15) family.

The protein localises to the cell inner membrane. In terms of biological role, involved in the uptake of osmoprotectants. Can transport glycine betaine, proline and choline. The chain is Glycine betaine/proline/choline transporter VP1723 from Vibrio parahaemolyticus serotype O3:K6 (strain RIMD 2210633).